The sequence spans 317 residues: D-alanine--D-alanine ligase (317 aa).

Positions 104–303 (KRVWLQHGLP…YAELCVAILA (200 aa)) constitute an ATP-grasp domain. Position 130–185 (130–185 (PDRLGLPLILKPPHEGSTVGITKVAACADMEQAYAAASHFDEVVLAEQFVRGRELT)) interacts with ATP. 3 residues coordinate Mg(2+): Asp-257, Glu-270, and Asn-272.

The protein belongs to the D-alanine--D-alanine ligase family. It depends on Mg(2+) as a cofactor. Requires Mn(2+) as cofactor.

It localises to the cytoplasm. It carries out the reaction 2 D-alanine + ATP = D-alanyl-D-alanine + ADP + phosphate + H(+). The protein operates within cell wall biogenesis; peptidoglycan biosynthesis. Its function is as follows. Cell wall formation. In Bordetella avium (strain 197N), this protein is D-alanine--D-alanine ligase.